The following is a 236-amino-acid chain: Sugar fermentation stimulation protein homolog (236 aa).

It belongs to the SfsA family.

This chain is Sugar fermentation stimulation protein homolog, found in Synechococcus elongatus (strain ATCC 33912 / PCC 7942 / FACHB-805) (Anacystis nidulans R2).